A 246-amino-acid chain; its full sequence is Polyhedrin (246 aa).

Belongs to the polyhedrin family.

In terms of biological role, major component of the virus occlusion bodies, which are large proteinaceous structures (polyhedra), that protect the virus from the outside environment for extended periods until they are ingested by insect larvae. The sequence is that of Polyhedrin (PH) from Lepidoptera (butterflies and moths).